We begin with the raw amino-acid sequence, 1014 residues long: MAAIKALQEWCRQQCEGYRDVSITNMTTSFRDGLAFCAILHRHRPDLINFNALRKENIYENNKLAFQVAEEQLGIPALLDAEDMVALKIPDRLSILTYVSQYYNYFHGRSPIGGMAGMKRPSSDSTEELSGKKKVPSQPAKLSSPVPTQRLPLSPARTNPVVQRNEGVSERPSPKAAPGTVGSSVSSICGVCGKHVHLVQRHLADGRLYHRSCFRCKQCSSTLHSGAYRATGEPGVFVCTHHSSEAVSVSPKLSNLASRQPGGGIADTRPIGVSQKVLETNGEATPLRARTAAWEHAGGNRAAKGFVQTELTPPATSRVHVGSPAGPRLPMSTVTTTSANSKATTHVTNSSPVGWSSSAQSSTGTSGSRPVVSPSALGAHLSVPQGQAASKGVKTQLNSSTDSSSTAPTPAWTSSSSRTQQAREKFFHNLSPAPAPAPASSSSSHASRVPTVVTAPSGKVSPLVNTSTSKVPSATVVTVPTSKASTVVTAPTSKAPTVVTVPISKAPTVVTAPTSKVSTVVTVPTSKASTVVTAPTSKASTVVTVPTGRGHVVVNTSASKVSGVVDNPAQESSREQALSVLRKALPGLTRAGSQAPSRSSPATSSVLITLPKNEVPPKVPSAKLSHSTTQAFSPTPKMEPTAPLSVGSTSWTSVSLQAGKKSPGISPGIGKTSAVSRPQAEVKGTSGPGPTSQEGQEEGPEGWRARLKPVDKSIPSARALEQKEPVLAEPRAGDTPRKASSSSDSSIHITLTPIQQKRTPCLADSGSSLAAPSPPSRRKKLVVPPTLDVSADWLQPELKKQDDQTRSCKEKTATWGTRESSAILDNDLVSPDEAVTSPVRLHPNYISQEELQRQLQDIERQLDALELRGVELEKRLRAAEGDASEDGLMVDWFRLIHEKQLLLRRESELMYKSKDQCLEERQLDLQGELRRLMEKPEGLKSPQDRKREQELLNQYVNTVNDRSDIVDNLDEDRLREQEEDQMLESMIQNLGLQRKKSKSFLSKIWSSKSKSGQT.

The Calponin-homology (CH) domain occupies 1-107; it reads MAAIKALQEW…YVSQYYNYFH (107 aa). Positions 1 to 261 are forms an intramolecular interaction with the C-terminal coiled coil domain keeping the protein in a closed conformation; the sequence is MAAIKALQEW…KLSNLASRQP (261 aa). Phosphoserine occurs at positions 110, 144, and 154. Residues 114 to 181 are disordered; the sequence is GMAGMKRPSS…PSPKAAPGTV (68 aa). An LIM zinc-binding domain is found at 187 to 249; the sequence is SICGVCGKHV…THHSSEAVSV (63 aa). The residue at position 250 (Ser-250) is a Phosphoserine. Residues 262 to 394 are necessary and sufficient for interaction with actinins; the sequence is GGGIADTRPI…QGQAASKGVK (133 aa). The segment at 262–810 is mediates targeting to the cell plasma membrane; it reads GGGIADTRPI…QDDQTRSCKE (549 aa). Disordered regions lie at residues 311 to 450 and 609 to 780; these read LTPP…SRVP and TLPK…RRKK. The span at 332 to 355 shows a compositional bias: polar residues; that stretch reads STVTTTSANSKATTHVTNSSPVGW. Residues 356 to 368 are compositionally biased toward low complexity; the sequence is SSSAQSSTGTSGS. Polar residues predominate over residues 384 to 398; that stretch reads PQGQAASKGVKTQLN. Composition is skewed to low complexity over residues 399-419 and 438-447; these read SSTD…SSRT and PASSSSSHAS. Polar residues-rich tracts occupy residues 624–633 and 646–656; these read LSHSTTQAFS and VGSTSWTSVSL. 2 stretches are compositionally biased toward basic and acidic residues: residues 701 to 711 and 720 to 737; these read EGWRARLKPVD and LEQK…DTPR. A compositionally biased stretch (polar residues) spans 747-758; that stretch reads IHITLTPIQQKR. Residue Thr-759 is modified to Phosphothreonine. Ser-773 and Ser-837 each carry phosphoserine. Residues 811-918 are forms an intramolecular interaction with the N-terminal Calponin-homology and LIM zinc-binding domains-containing region keeping the protein in a closed conformation; sequence KTATWGTRES…LMYKSKDQCL (108 aa). The 148-residue stretch at 838 to 985 folds into the bMERB domain; it reads PVRLHPNYIS…EQEEDQMLES (148 aa). The stretch at 845-885 forms a coiled coil; that stretch reads YISQEELQRQLQDIERQLDALELRGVELEKRLRAAEGDASE. The mediates interaction with RAB13 and is required for transition from the closed to the open conformation stretch occupies residues 918 to 1014; that stretch reads LEERQLDLQG…WSSKSKSGQT (97 aa).

In terms of assembly, interacts with RAB13 (GTP-bound form); competes with RAB8A and is involved in tight junctions assembly. Interacts with RAB8A; competes with RAB13 and is involved in E-cadherin endocytic recycling. Interacts with RAB8B. Interacts (preferentially in opened conformation) with ACTN1 and ACTN4; stimulated by RAB13 activation. Interacts (via calponin-homology (CH) domain) with the filamins FLNA, FLNB and FLNC (via actin-binding domain).

It localises to the cell membrane. The protein resides in the cell junction. It is found in the tight junction. The protein localises to the recycling endosome. Its subcellular location is the cell projection. It localises to the neuron projection. The protein resides in the cytoplasm. It is found in the cytoskeleton. Functionally, effector of small Rab GTPases which is involved in junctional complexes assembly through the regulation of cell adhesion molecules transport to the plasma membrane and actin cytoskeleton reorganization. Regulates the endocytic recycling of occludins, claudins and E-cadherin to the plasma membrane and may thereby regulate the establishment of tight junctions and adherens junctions. In parallel, may regulate actin cytoskeleton reorganization directly through interaction with F-actin or indirectly through actinins and filamins. Most probably involved in the processes of epithelial cell differentiation, cell spreading and neurite outgrowth. Undergoes liquid-liquid phase separation to form tubular recycling endosomes. Plays 2 sequential roles in the biogenesis of tubular recycling endosomes: first organizes phase separation and then the closed form formed by interaction with RAB8A promotes endosomal tubulation. The sequence is that of MICAL-like protein 2 (Micall2) from Rattus norvegicus (Rat).